The chain runs to 185 residues: Elongation factor P (185 aa).

The protein belongs to the elongation factor P family.

It localises to the cytoplasm. It functions in the pathway protein biosynthesis; polypeptide chain elongation. Functionally, involved in peptide bond synthesis. Stimulates efficient translation and peptide-bond synthesis on native or reconstituted 70S ribosomes in vitro. Probably functions indirectly by altering the affinity of the ribosome for aminoacyl-tRNA, thus increasing their reactivity as acceptors for peptidyl transferase. This Synechococcus elongatus (strain ATCC 33912 / PCC 7942 / FACHB-805) (Anacystis nidulans R2) protein is Elongation factor P (efp).